The primary structure comprises 147 residues: Ribosomal RNA large subunit methyltransferase H (147 aa).

Residues L66, G95, and 114–119 (LSELTF) each bind S-adenosyl-L-methionine.

It belongs to the RNA methyltransferase RlmH family. In terms of assembly, homodimer.

The protein localises to the cytoplasm. The catalysed reaction is pseudouridine(1915) in 23S rRNA + S-adenosyl-L-methionine = N(3)-methylpseudouridine(1915) in 23S rRNA + S-adenosyl-L-homocysteine + H(+). In terms of biological role, specifically methylates the pseudouridine at position 1915 (m3Psi1915) in 23S rRNA. The sequence is that of Ribosomal RNA large subunit methyltransferase H from Synechococcus sp. (strain RCC307).